Consider the following 292-residue polypeptide: ATP-dependent Clp protease proteolytic subunit 4, chloroplastic (292 aa).

A chloroplast-targeting transit peptide spans 1-65 (MGTLSLSSSL…LRFANASIEM (65 aa)). Residue Ser66 is modified to N-acetylserine. The active-site Nucleophile is the Ser158. The active site involves His183.

The protein belongs to the peptidase S14 family. Component of the chloroplastic Clp protease core complex which consist of at least 16 proteins: CLPP4 (3 copies), CLPP5 (3 copies), CLPR4 (2 copies), ClpP1 (1 copy), CLPP6 (1 copy), CLPR2 (1 copy), CLPT1 (1 copy), CLPT2 (1 copy) and 3 copies of CLPP3 and/or CLPR1 and/or CLPR3. Interacts with CHIP. The core complex is organized in two heptameric rings, one containing CLPP3,4,5,6 in a 1:2:3:1 ratio and the other CLPP1 and CLPR1,2,3,4 in a 3:1:1:1:1 ratio. In terms of processing, ubiquitinated by CHIP. In terms of tissue distribution, mostly expressed in leaves. Also detected in stems, and to a lower extent, in roots (at protein level).

The protein localises to the plastid. It localises to the chloroplast stroma. It carries out the reaction Hydrolysis of proteins to small peptides in the presence of ATP and magnesium. alpha-casein is the usual test substrate. In the absence of ATP, only oligopeptides shorter than five residues are hydrolyzed (such as succinyl-Leu-Tyr-|-NHMec, and Leu-Tyr-Leu-|-Tyr-Trp, in which cleavage of the -Tyr-|-Leu- and -Tyr-|-Trp bonds also occurs).. Functionally, cleaves peptides in various proteins in a process that requires ATP hydrolysis. Has a chymotrypsin-like activity. Plays a major role in the degradation of misfolded proteins. Essential protein required for chloroplast development and integrity. Essential for Embryogenesis. This chain is ATP-dependent Clp protease proteolytic subunit 4, chloroplastic, found in Arabidopsis thaliana (Mouse-ear cress).